A 297-amino-acid polypeptide reads, in one-letter code: HTH-type transcriptional regulator ArgP (297 aa).

One can recognise an HTH lysR-type domain in the interval 4–60 (PDYRTLQALDAVIRERGFERAAQKLCITQSAVSQRIKQLENMFGQPLLVRTVPPRPT). Positions 21 to 40 (FERAAQKLCITQSAVSQRIK) form a DNA-binding region, H-T-H motif.

The protein belongs to the LysR transcriptional regulatory family. In terms of assembly, homodimer.

Its function is as follows. Controls the transcription of genes involved in arginine and lysine metabolism. In Salmonella choleraesuis (strain SC-B67), this protein is HTH-type transcriptional regulator ArgP.